Consider the following 182-residue polypeptide: Ribosome-recycling factor (182 aa).

The tract at residues 136–156 (IRKQEKNSDISKDESRDLQDK) is disordered.

This sequence belongs to the RRF family.

Its subcellular location is the cytoplasm. Functionally, responsible for the release of ribosomes from messenger RNA at the termination of protein biosynthesis. May increase the efficiency of translation by recycling ribosomes from one round of translation to another. The sequence is that of Ribosome-recycling factor from Trichodesmium erythraeum (strain IMS101).